Consider the following 509-residue polypeptide: ATP synthase subunit alpha, mitochondrial (509 aa).

171 to 178 is an ATP binding site; it reads GDRQTGKT.

The protein belongs to the ATPase alpha/beta chains family. As to quaternary structure, F-type ATPases have 2 components, CF(1) - the catalytic core - and CF(0) - the membrane proton channel. CF(1) has five subunits: alpha(3), beta(3), gamma(1), delta(1), epsilon(1). CF(0) has three main subunits: a, b and c.

It localises to the mitochondrion. The protein localises to the mitochondrion inner membrane. In terms of biological role, mitochondrial membrane ATP synthase (F(1)F(0) ATP synthase or Complex V) produces ATP from ADP in the presence of a proton gradient across the membrane which is generated by electron transport complexes of the respiratory chain. F-type ATPases consist of two structural domains, F(1) - containing the extramembraneous catalytic core, and F(0) - containing the membrane proton channel, linked together by a central stalk and a peripheral stalk. During catalysis, ATP synthesis in the catalytic domain of F(1) is coupled via a rotary mechanism of the central stalk subunits to proton translocation. Subunits alpha and beta form the catalytic core in F(1). Rotation of the central stalk against the surrounding alpha(3)beta(3) subunits leads to hydrolysis of ATP in three separate catalytic sites on the beta subunits. Subunit alpha does not bear the catalytic high-affinity ATP-binding sites. The polypeptide is ATP synthase subunit alpha, mitochondrial (ATPA) (Nicotiana plumbaginifolia (Leadwort-leaved tobacco)).